The following is a 309-amino-acid chain: Homoserine kinase (309 aa).

85–95 serves as a coordination point for ATP; the sequence is PYGLGLGSSGS.

This sequence belongs to the GHMP kinase family. Homoserine kinase subfamily.

The protein localises to the cytoplasm. It catalyses the reaction L-homoserine + ATP = O-phospho-L-homoserine + ADP + H(+). It participates in amino-acid biosynthesis; L-threonine biosynthesis; L-threonine from L-aspartate: step 4/5. In terms of biological role, catalyzes the ATP-dependent phosphorylation of L-homoserine to L-homoserine phosphate. The chain is Homoserine kinase from Thermoplasma volcanium (strain ATCC 51530 / DSM 4299 / JCM 9571 / NBRC 15438 / GSS1).